The sequence spans 396 residues: Phosphoglycerate kinase (396 aa).

Residues 21–23 (DFN), Arg-36, 59–62 (HLGK), Arg-119, and Arg-156 each bind substrate. Residues Lys-206, Gly-294, Glu-325, and 352 to 355 (GGDS) contribute to the ATP site.

The protein belongs to the phosphoglycerate kinase family. As to quaternary structure, monomer.

The protein resides in the cytoplasm. The catalysed reaction is (2R)-3-phosphoglycerate + ATP = (2R)-3-phospho-glyceroyl phosphate + ADP. Its pathway is carbohydrate degradation; glycolysis; pyruvate from D-glyceraldehyde 3-phosphate: step 2/5. The protein is Phosphoglycerate kinase of Listeria welshimeri serovar 6b (strain ATCC 35897 / DSM 20650 / CCUG 15529 / CIP 8149 / NCTC 11857 / SLCC 5334 / V8).